The primary structure comprises 423 residues: Sporulation-regulated protein 28 (423 aa).

Positions 28–342 (KGLQLSILLL…ENYRAKVLTE (315 aa)) constitute a Septin-type G domain. Residues 38–45 (GEKGSGKS) are G1 motif. Residues 38 to 45 (GEKGSGKS), glycine 124, 204 to 212 (KADGLTETE), and arginine 291 contribute to the GTP site. The segment at 121-124 (LFPG) is G3 motif. Residues 203-206 (PKAD) are G4 motif. The span at 360-381 (RGSVSNVSTRRNSASRTLGNPD) shows a compositional bias: polar residues. Positions 360-385 (RGSVSNVSTRRNSASRTLGNPDTNDE) are disordered. A coiled-coil region spans residues 384-417 (DENAYQIHKEIDEKNRIIEDYQRKIDLLEKMLAA).

The protein belongs to the TRAFAC class TrmE-Era-EngA-EngB-Septin-like GTPase superfamily. Septin GTPase family. As to quaternary structure, interacts with itself. Interacts with CDC11 and SPR3; probably to form a ring at the bud neck.

The protein localises to the membrane. It is found in the bud neck. Its function is as follows. Septins are GTPases involved in cytokinesis that assemble into filaments and form a ring at the cleavage site. May act by recruiting MYO1 and HOF1, a protein involved in septation, to the site of cleavage. Septins are also involved in cell morphogenesis, bud site selection, chitin deposition, cell cycle regulation, cell compartmentalization and spore wall formation. This chain is Sporulation-regulated protein 28 (SPR28), found in Saccharomyces cerevisiae (strain ATCC 204508 / S288c) (Baker's yeast).